The following is a 220-amino-acid chain: Probable GTP-binding protein EngB (220 aa).

The EngB-type G domain occupies 26-200 (EGIEIAFAGR…RAKLDEWYAP (175 aa)). GTP-binding positions include 34 to 41 (GRSNAGKS), 61 to 65 (GRTQL), 79 to 82 (DLPG), 146 to 149 (TKAD), and 179 to 181 (FSS). Residues Ser41 and Thr63 each contribute to the Mg(2+) site.

The protein belongs to the TRAFAC class TrmE-Era-EngA-EngB-Septin-like GTPase superfamily. EngB GTPase family. Mg(2+) serves as cofactor.

In terms of biological role, necessary for normal cell division and for the maintenance of normal septation. The polypeptide is Probable GTP-binding protein EngB (Vibrio cholerae serotype O1 (strain ATCC 39315 / El Tor Inaba N16961)).